Reading from the N-terminus, the 120-residue chain is Large ribosomal subunit protein uL18 (120 aa).

It belongs to the universal ribosomal protein uL18 family. Part of the 50S ribosomal subunit; part of the 5S rRNA/L5/L18/L25 subcomplex. Contacts the 5S and 23S rRNAs.

Its function is as follows. This is one of the proteins that bind and probably mediate the attachment of the 5S RNA into the large ribosomal subunit, where it forms part of the central protuberance. In Rhizobium leguminosarum bv. trifolii (strain WSM2304), this protein is Large ribosomal subunit protein uL18.